Reading from the N-terminus, the 478-residue chain is MGRKKKKQLKPWCWYCNRDFDDEKILIQHQKAKHFKCHICHKKLYTGPGLAIHCMQVHKETIDAVPNAIPGRTDIELEIYGMEGIPEKDMDERRRLLEQKTQESQKKKQQDDSDEYDDDDSAASTSFQPQPVQPQQGYIPPMAQPGLPPVPGAPGMPPGIPPLMPGVPPLMPGMPPVMPGMPPGMMPMGGMMPPGPGIPPLMPGMPPGMPPPVPRPGIPPMTQAQAVSAPGILNRPPAPTATVPAPQPPVTKPLFPSAGQMGTPVTSSSTASSNSESLSASSKALFPSTAQAQAAVQGPVGTDFKPLNSTPATTTEPPKPTFPAYTQSTASTTSTTNSTAAKPAASITSKPATLTTTSATSKLIHPDEDISLEERRAQLPKYQRNLPRPGQAPIGNPPVGPIGGMMPPQPGIPQQQGMRPPMPPHGQYGGHHQGMPGYLPGAMPPYGQGPPMVPPYQGGPPRPPMGMRPPVMSQGGRY.

Residues 1–92 (MGRKKKKQLK…EGIPEKDMDE (92 aa)) form a microtubule-binding region region. 2 consecutive C2H2-type zinc fingers follow at residues 11-34 (PWCWYCNRDFDDEKILIQHQKAKH) and 35-58 (FKCHICHKKLYTGPGLAIHCMQVH). Residues 99–111 (QKTQESQKKKQQD) show a composition bias toward basic and acidic residues. Disordered stretches follow at residues 99–157 (QKTQ…PGMP), 238–276 (APTATVPAPQPPVTKPLFPSAGQMGTPVTSSSTASSNSE), 300–362 (VGTD…ATSK), and 384–478 (RNLP…GGRY). Residues 112–121 (DSDEYDDDDS) are compositionally biased toward acidic residues. Positions 127–136 (FQPQPVQPQQ) are enriched in polar residues. The span at 142 to 157 (MAQPGLPPVPGAPGMP) shows a compositional bias: pro residues. 3 stretches are compositionally biased toward low complexity: residues 267–276 (SSSTASSNSE), 310–362 (TPAT…ATSK), and 433–446 (QGMPGYLPGAMPPY). Residues 359–391 (ATSKLIHPDEDISLEERRAQLPKYQRNLPRPGQ) are GLEBS. Over residues 447–467 (GQGPPMVPPYQGGPPRPPMGM) the composition is skewed to pro residues.

As to quaternary structure, interacts (via GLEBS region) with BUB3. Ubiquitous.

The protein localises to the nucleus. The protein resides in the chromosome. It localises to the centromere. It is found in the kinetochore. Its subcellular location is the cytoplasm. The protein localises to the cytoskeleton. The protein resides in the spindle. In terms of biological role, kinetochore- and microtubule-binding protein that plays a key role in spindle assembly. ZNF207/BuGZ is mainly composed of disordered low-complexity regions and undergoes phase transition or coacervation to form temperature-dependent liquid droplets. Coacervation promotes microtubule bundling and concentrates tubulin, promoting microtubule polymerization and assembly of spindle and spindle matrix by concentrating its building blocks. Also acts as a regulator of mitotic chromosome alignment by mediating the stability and kinetochore loading of BUB3. Mechanisms by which BUB3 is protected are unclear: according to a first report, ZNF207/BuGZ may act by blocking ubiquitination and proteasomal degradation of BUB3. According to another report, the stabilization is independent of the proteasome. This is BUB3-interacting and GLEBS motif-containing protein ZNF207 from Homo sapiens (Human).